Here is a 179-residue protein sequence, read N- to C-terminus: Probable phosphopantothenoylcysteine decarboxylase (179 aa).

N124 contributes to the substrate binding site. The Proton donor role is filled by C157.

The protein belongs to the HFCD (homooligomeric flavin containing Cys decarboxylase) superfamily. The cofactor is FMN.

The catalysed reaction is N-[(R)-4-phosphopantothenoyl]-L-cysteine + H(+) = (R)-4'-phosphopantetheine + CO2. Its pathway is cofactor biosynthesis; coenzyme A biosynthesis; CoA from (R)-pantothenate: step 3/5. Catalyzes the decarboxylation of 4'-phosphopantothenoylcysteine to 4'-phosphopantetheine. In Streptococcus mutans serotype c (strain ATCC 700610 / UA159), this protein is Probable phosphopantothenoylcysteine decarboxylase (coaC).